Consider the following 275-residue polypeptide: NH(3)-dependent NAD(+) synthetase (275 aa).

46-53 is a binding site for ATP; the sequence is GISGGQDS. Aspartate 52 contacts Mg(2+). Arginine 140 serves as a coordination point for deamido-NAD(+). Position 160 (threonine 160) interacts with ATP. Mg(2+) is bound at residue glutamate 165. Deamido-NAD(+)-binding residues include lysine 173 and aspartate 180. Positions 189 and 211 each coordinate ATP. Residue 260–261 participates in deamido-NAD(+) binding; that stretch reads HK.

It belongs to the NAD synthetase family. In terms of assembly, homodimer.

The enzyme catalyses deamido-NAD(+) + NH4(+) + ATP = AMP + diphosphate + NAD(+) + H(+). Its pathway is cofactor biosynthesis; NAD(+) biosynthesis; NAD(+) from deamido-NAD(+) (ammonia route): step 1/1. Its function is as follows. Catalyzes the ATP-dependent amidation of deamido-NAD to form NAD. Uses ammonia as a nitrogen source. This chain is NH(3)-dependent NAD(+) synthetase, found in Enterobacter sp. (strain 638).